The chain runs to 308 residues: Glutaminase 2 (308 aa).

Ser66, Asn117, Glu161, Asn168, Tyr192, Tyr244, and Val262 together coordinate substrate.

This sequence belongs to the glutaminase family. As to quaternary structure, homotetramer.

The catalysed reaction is L-glutamine + H2O = L-glutamate + NH4(+). This is Glutaminase 2 from Shigella flexneri.